The primary structure comprises 427 residues: Tumor necrosis factor receptor superfamily member 16 (427 aa).

An N-terminal signal peptide occupies residues 1 to 31; that stretch reads MRRAGAACSAMDRLRLLLLLLLLLGVSFGGA. Residues 32–254 are Extracellular-facing; sequence KETCSTGMYT…VVTRGTADNL (223 aa). 4 TNFR-Cys repeats span residues 34–67, 69–110, 111–149, and 151–191; these read TCST…QTVC, PCLD…DAVC, RCSY…NTVC, and ECPE…DAEC. 12 disulfide bridges follow: cysteine 35–cysteine 46, cysteine 47–cysteine 60, cysteine 50–cysteine 67, cysteine 70–cysteine 86, cysteine 89–cysteine 102, cysteine 92–cysteine 110, cysteine 112–cysteine 125, cysteine 128–cysteine 141, cysteine 131–cysteine 149, cysteine 152–cysteine 167, cysteine 170–cysteine 183, and cysteine 173–cysteine 191. N-linked (GlcNAc...) asparagine glycosylation is present at asparagine 63. The disordered stretch occupies residues 197–223; the sequence is RWITRSTPPEGSDVTTPSTQEPEAPPE. Polar residues predominate over residues 200–217; the sequence is TRSTPPEGSDVTTPSTQE. The chain crosses the membrane as a helical span at residues 255-275; the sequence is IPVYCSILAAVVVGLVAYIAF. The Cytoplasmic portion of the chain corresponds to 276–427; sequence KRWNSCKQNK…CSESTATSPV (152 aa). Polar residues-rich tracts occupy residues 284–294 and 308–329; these read NKQGANSRPVN and SGIS…TASG. A disordered region spans residues 284–334; it reads NKQGANSRPVNQTPPPEGEKLHSDSGISVDSQSLHDQQTHTQTASGQALKG. Serine 314 is modified (phosphoserine). Residues 329 to 344 form a mediates interaction with KIDINS220 region; sequence GQALKGDGNLYSSLPL. The region spanning 356-421 is the Death domain; sequence GDTWRHLAGE…DIVESLCSES (66 aa).

As to quaternary structure, homodimer; disulfide-linked. Heterodimer with SORCS2. The extracellular domains of the heterodimer bind NGF. The cytoplasmic region of the heterodimer binds TRIO. NGF binding mediates dissociation of TRIO from the receptor complex. Interacts with TRAF2, TRAF4, TRAF6, PTPN13 and RANBP9. Interacts through TRAF6 with SQSTM1 which bridges NGFR to NTRK1. Interacts with BEX1. Interacts with BEX3. Interacts with KIDINS220 and NTRK1. Can form a ternary complex with NTRK1 and KIDINS220 and this complex is affected by the expression levels of KIDINS220. An increase in KIDINS220 expression leads to a decreased association of NGFR and NTRK1. Interacts (via death domain) with RAB31. Interacts with NTRK2; may regulate the ligand specificity of the NTRK2 receptor. Interacts with LINGO1. Interacts with NRADD. Interacts with MAGED1; the interaction antagonizes the association NGFR:NTRK1. Interacts with RTN4R. Interacts (via death domain) with ARHGDIA and RIPK2. Interacts with BFAR. In terms of assembly, (Microbial infection) Binds to rabies virus glycoprotein Gs. N-glycosylated. O-glycosylated. Post-translationally, phosphorylated on serine residues. Detected in Schwann cells. Detected in embryonic brain, in hippocampus neurons (at protein level). Detected in brain and spinal cord.

Its subcellular location is the cell membrane. The protein resides in the cytoplasm. It localises to the perikaryon. The protein localises to the cell projection. It is found in the growth cone. Its subcellular location is the dendritic spine. Its function is as follows. Low affinity neurotrophin receptor which can bind to mature NGF, BDNF, NTF3, and NTF4. Forms a heterodimeric receptor with SORCS2 that binds the precursor forms of NGF (proNGF), BDNF (proBDNF) and NTF3 (proNT3) with high affinity, and has much lower affinity for mature NGF and BDNF. Plays an important role in differentiation and survival of specific neuronal populations during development. Can mediate cell survival as well as cell death of neural cells. The heterodimeric receptor formed with SORCS2 plays a role in proBDNF-dependent synaptic plasticity, in hippocampal long term depression (LTD) and long term potentiation (LTP). Plays a role in the inactivation of RHOA. Plays a role in the regulation of the translocation of GLUT4 to the cell surface in adipocytes and skeletal muscle cells in response to insulin, probably by regulating RAB31 activity, and thereby contributes to the regulation of insulin-dependent glucose uptake. Necessary for the circadian oscillation of the clock genes BMAL1, PER1, PER2 and NR1D1 in the suprachiasmatic nucleus (SCN) of the brain and in liver and of the genes involved in glucose and lipid metabolism in the liver. In terms of biological role, (Microbial infection) Cell surface receptor for rabies virus glycoprotein Gs. Does not bind NGF, BDNF, NTF3, and NTF4. This is Tumor necrosis factor receptor superfamily member 16 (Ngfr) from Mus musculus (Mouse).